The primary structure comprises 354 residues: Uroporphyrinogen decarboxylase (354 aa).

Residues 27-31 (RQAGR), D77, Y154, T209, and H327 each bind substrate.

Belongs to the uroporphyrinogen decarboxylase family. In terms of assembly, homodimer.

It localises to the cytoplasm. It carries out the reaction uroporphyrinogen III + 4 H(+) = coproporphyrinogen III + 4 CO2. Its pathway is porphyrin-containing compound metabolism; protoporphyrin-IX biosynthesis; coproporphyrinogen-III from 5-aminolevulinate: step 4/4. Catalyzes the decarboxylation of four acetate groups of uroporphyrinogen-III to yield coproporphyrinogen-III. This is Uroporphyrinogen decarboxylase from Salmonella arizonae (strain ATCC BAA-731 / CDC346-86 / RSK2980).